A 284-amino-acid polypeptide reads, in one-letter code: Tropomyosin Tod p 1.0102 (284 aa).

Residues 15 to 273 (KEVATDKAEQ…KERYKSISDE (259 aa)) adopt a coiled-coil conformation. Residues 103 to 136 (EERLTSAQSKLEDASKAADESERGRKVLENRSQG) are disordered.

This sequence belongs to the tropomyosin family. In terms of assembly, homodimer. Post-translationally, the N-terminus is blocked. Expressed in mantle muscle (at protein level).

Functionally, tropomyosin, in association with the troponin complex, plays a central role in the calcium dependent regulation of muscle contraction. This chain is Tropomyosin Tod p 1.0102, found in Todarodes pacificus (Japanese flying squid).